The primary structure comprises 644 residues: MERQRRFMSEKDEYQFQHQGAVELLVFNFLLILTILTIWLFKNHRFRFLHETGGAMVYGLIMGLILRYATAPTDIESGTVYDCGKLAFSPSTLLINITDQVYEYKYKREISQHNINPHLGNAILEKMTFDPEIFFNVLLPPIIFHAGYSLKKRHFFQNLGSILTYAFLGTAISCIVIGLIMYGFVKAMVYAGQLKNGDFHFTDCLFFGSLMSATDPVTVLAIFHELHVDPDLYTLLFGESVLNDAVAIVLTYSISIYSPKENPNAFDAAAFFQSVGNFLGIFAGSFAMGSAYAVVTALLTKFTKLCEFPMLETGLFFLLSWSAFLSAEAAGLTGIVAVLFCGVTQAHYTYNNLSLDSKMRTKQLFEFMNFLAENVIFCYMGLALFTFQNHIFNALFILGAFLAIFVARACNIYPLSFLLNLGRKHKIPWNFQHMMMFSGLRGAIAFALAIRDTESQPKQMMFSTTLLLVFFTVWVFGGGTTPMLTWLQIRVGVDLDEDLKERPSSHQEANNLEKSTTKTESAWLFRMWYGFDHKYLKPILTHSGPPLTTTLPEWCGPISRLLTSPQAYGEQLKEDDAECIVNQDELAMNYQEQAASPCSPPTRLGLDQKAAPQTPGKENIYEGDLGLGGYELKLEQTPGQSQLN.

The Lumenal segment spans residues 1–20 (MERQRRFMSEKDEYQFQHQG). Residues 21 to 41 (AVELLVFNFLLILTILTIWLF) form a helical membrane-spanning segment. Residues 42-45 (KNHR) lie on the Cytoplasmic side of the membrane. A helical membrane pass occupies residues 46–66 (FRFLHETGGAMVYGLIMGLIL). The Lumenal portion of the chain corresponds to 67–126 (RYATAPTDIESGTVYDCGKLAFSPSTLLINITDQVYEYKYKREISQHNINPHLGNAILEK). A helical transmembrane segment spans residues 127–147 (MTFDPEIFFNVLLPPIIFHAG). Over 148–164 (YSLKKRHFFQNLGSILT) the chain is Cytoplasmic. Residues 165–185 (YAFLGTAISCIVIGLIMYGFV) form a helical membrane-spanning segment. Residues 186 to 203 (KAMVYAGQLKNGDFHFTD) lie on the Lumenal side of the membrane. The chain crosses the membrane as a helical span at residues 204–224 (CLFFGSLMSATDPVTVLAIFH). Topologically, residues 225–235 (ELHVDPDLYTL) are cytoplasmic. A helical transmembrane segment spans residues 236–256 (LFGESVLNDAVAIVLTYSISI). The Lumenal portion of the chain corresponds to 257–277 (YSPKENPNAFDAAAFFQSVGN). The chain crosses the membrane as a helical span at residues 278-298 (FLGIFAGSFAMGSAYAVVTAL). Residues 299-301 (LTK) lie on the Cytoplasmic side of the membrane. Transmembrane regions (helical) follow at residues 302–322 (FTKL…LSWS) and 323–343 (AFLS…FCGV). Residues 344 to 364 (TQAHYTYNNLSLDSKMRTKQL) lie on the Cytoplasmic side of the membrane. The chain crosses the membrane as a helical span at residues 365-385 (FEFMNFLAENVIFCYMGLALF). Thr386 is a topological domain (lumenal). The helical transmembrane segment at 387–407 (FQNHIFNALFILGAFLAIFVA) threads the bilayer. The Cytoplasmic segment spans residues 408 to 429 (RACNIYPLSFLLNLGRKHKIPW). The helical transmembrane segment at 430–450 (NFQHMMMFSGLRGAIAFALAI) threads the bilayer. The Lumenal portion of the chain corresponds to 451–465 (RDTESQPKQMMFSTT). A helical membrane pass occupies residues 466 to 486 (LLLVFFTVWVFGGGTTPMLTW). The Cytoplasmic segment spans residues 487-644 (LQIRVGVDLD…EQTPGQSQLN (158 aa)). The tract at residues 593–622 (QAASPCSPPTRLGLDQKAAPQTPGKENIYE) is disordered.

Belongs to the monovalent cation:proton antiporter 1 (CPA1) transporter (TC 2.A.36) family. As to quaternary structure, homodimer; phosphatidylinositol-4,5-bisphosphate (PIP2) and phosphatidylinositol 3,4,5-trisphosphate (PIP3) could be involved in the dimer stabilization. Interacts (via the C-terminus) with RACK1. Interacts with CHP1.

The protein localises to the late endosome membrane. The protein resides in the early endosome membrane. It is found in the recycling endosome membrane. Its subcellular location is the cell membrane. It localises to the cytoplasmic vesicle. The protein localises to the phagosome membrane. It catalyses the reaction Na(+)(in) + H(+)(out) = Na(+)(out) + H(+)(in). It carries out the reaction K(+)(in) + H(+)(out) = K(+)(out) + H(+)(in). In terms of biological role, endosomal Na(+), K(+)/H(+) antiporter. Mediates the electroneutral exchange of endosomal luminal H(+) for a cytosolic Na(+) or K(+). By facilitating proton efflux, SLC9A9 counteracts the acidity generated by vacuolar (V)-ATPase, thereby limiting luminal acidification. Regulates organellar pH and consequently, endosome maturation and endocytic trafficking of plasma membrane receptors and neurotransporters. Promotes the recycling of transferrin receptors back to the cell surface to facilitate additional iron uptake in the brain. Regulates synaptic transmission by regulating the luminal pH of axonal endosomes. Regulates phagosome lumenal pH, thus affecting phagosome maturation, and consequently, microbicidal activity in macrophages. Can also be active at the cell surface of specialized cells, e.g., in the inner ear hair bundles uses the high K(+) of the endolymph to regulate intracelular pH. This is Sodium/hydrogen exchanger 9 (SLC9A9) from Equus caballus (Horse).